The following is a 680-amino-acid chain: Multisubstrate pseudouridine synthase 7 (680 aa).

2 stretches are compositionally biased toward basic and acidic residues: residues 1–30 (MSQE…RNGL) and 99–116 (ILSK…KDSS). Disordered regions lie at residues 1 to 42 (MSQE…DLSG), 99 to 136 (ILSK…EPAT), and 206 to 229 (TKGN…RRDP). A compositionally biased stretch (polar residues) spans 206 to 216 (TKGNGTFTVSK). Catalysis depends on aspartate 277, which acts as the Nucleophile. A TRUD domain is found at 358-596 (GFINYFGLQR…PGDYRKLLVR (239 aa)).

Belongs to the pseudouridine synthase TruD family.

It localises to the nucleus. The protein localises to the cytoplasm. It carries out the reaction uridine in 5S rRNA = pseudouridine in 5S rRNA. The catalysed reaction is uridine in snRNA = pseudouridine in snRNA. It catalyses the reaction uridine(13) in tRNA = pseudouridine(13) in tRNA. The enzyme catalyses a uridine in mRNA = a pseudouridine in mRNA. In terms of biological role, catalyzes pseudouridylation at position 35 in U2 snRNA stem-loop II region which induces particular conformation of the mRNA-U2 snRNA duplex and places the nucleophile in an accessible position for the first step of splicing. Also catalyzes pseudouridylation at position 56 in U2 snRNA. Also catalyzes pseudouridylation at position 50 in 5S rRNA, position 13 in cytoplasmic tRNAs, and position 35 in pre-tRNA(Tyr). Pseudouridine residues in tRNAs may stabilize the local RNA conformation, favor interactions with protein partners and play an important role in the stabilization of the codon-anticodon interaction with mRNA. Also catalyzes pseudouridylation of mRNAs in response to heat shock: mediates pseudouridylation of mRNAs with the consensus sequence 5'-UGUAR-3'. This Schizosaccharomyces pombe (strain 972 / ATCC 24843) (Fission yeast) protein is Multisubstrate pseudouridine synthase 7 (pus7).